The primary structure comprises 209 residues: Mitochondrial import inner membrane translocase subunit Tim23 (209 aa).

The next 3 membrane-spanning stretches (helical) occupy residues 73-93, 125-145, and 172-194; these read FELA…FGAM, ALWA…GVII, and GGLR…YALY.

Belongs to the Tim17/Tim22/Tim23 family. Component of the TIM23 complex at least composed of TIMM23, TIMM17 (TIMM17A or TIMM17B) and TIMM50; within this complex, directly interacts with TIMM50. The complex interacts with the TIMM44 component of the PAM complex and with DNAJC15. Upon mitochondrial depolarization, interacts with PINK1; the interaction is required for PINK1 accumulation at the outer mitochondrial membrane, kinase activation by autophosphorylation and PRKN recruitement to mitochondria.

The protein localises to the mitochondrion inner membrane. Functionally, essential component of the TIM23 complex, a complex that mediates the translocation of transit peptide-containing proteins across the mitochondrial inner membrane. Has a role in the activation of stress-induced mitophagy by protecting PINK1 from OMA1-mediated degradation and facilitating its accumulation at the outer mitochondrial membrane in response to depolarization. This Pongo abelii (Sumatran orangutan) protein is Mitochondrial import inner membrane translocase subunit Tim23 (TIMM23).